We begin with the raw amino-acid sequence, 458 residues long: Protein amnionless (458 aa).

A signal peptide spans M1–A19. The Extracellular segment spans residues A20–A366. N-linked (GlcNAc...) asparagine glycosylation is present at N35. 6 cysteine pairs are disulfide-bonded: C43–C96, C137–C213, C205–C211, C223–C249, C234–C250, and C239–C253. Residues S67–A87 are interaction with CUBN. Residues G203–G254 enclose the VWFC domain. Residues G367 to L387 traverse the membrane as a helical segment. Residues R388–A458 are Cytoplasmic-facing. The interval S422 to S446 is disordered.

Interacts (via extracellular region) with CUBN/cubilin. This gives rise to a huge complex containing one AMN chain and three CUBN chains. N-glycosylated. Post-translationally, a soluble form arises by proteolytic removal of the membrane anchor. Detected in kidney (at protein level). Detected in kidney and ileum.

It is found in the apical cell membrane. It localises to the cell membrane. The protein resides in the endosome membrane. The protein localises to the membrane. Its subcellular location is the coated pit. It is found in the secreted. Functionally, membrane-bound component of the endocytic receptor formed by AMN and CUBN. Required for normal CUBN glycosylation and trafficking to the cell surface. The complex formed by AMN and CUBN is required for efficient absorption of vitamin B12. Required for normal CUBN-mediated protein transport in the kidney. The protein is Protein amnionless (AMN) of Canis lupus familiaris (Dog).